A 632-amino-acid polypeptide reads, in one-letter code: Bifunctional protein GlmU (632 aa).

Residues 1–229 (MAERELSVAI…PQEIVGVNDR (229 aa)) form a pyrophosphorylase region. Residues 11 to 14 (LAAG), lysine 25, glutamine 76, and 81 to 82 (GT) each bind UDP-N-acetyl-alpha-D-glucosamine. Aspartate 106 provides a ligand contact to Mg(2+). 4 residues coordinate UDP-N-acetyl-alpha-D-glucosamine: glycine 143, glutamate 158, asparagine 173, and asparagine 227. Asparagine 227 is a binding site for Mg(2+). The linker stretch occupies residues 230–250 (RQLAQAYQILQDRLKEAWMEA). The interval 251–632 (GVTFVDPDSS…ADNSRPKSLQ (382 aa)) is N-acetyltransferase. UDP-N-acetyl-alpha-D-glucosamine contacts are provided by arginine 332 and lysine 350. Histidine 362 (proton acceptor) is an active-site residue. Tyrosine 365 and asparagine 376 together coordinate UDP-N-acetyl-alpha-D-glucosamine. Acetyl-CoA is bound by residues alanine 379, 385-386 (NY), alanine 422, and arginine 441. A disordered region spans residues 600 to 632 (VAGDPCWPSPPPQPQQNQQTKPEADNSRPKSLQ). Positions 621–632 (PEADNSRPKSLQ) are enriched in basic and acidic residues.

The protein in the N-terminal section; belongs to the N-acetylglucosamine-1-phosphate uridyltransferase family. This sequence in the C-terminal section; belongs to the transferase hexapeptide repeat family. Homotrimer. Mg(2+) is required as a cofactor.

It is found in the cytoplasm. It carries out the reaction alpha-D-glucosamine 1-phosphate + acetyl-CoA = N-acetyl-alpha-D-glucosamine 1-phosphate + CoA + H(+). It catalyses the reaction N-acetyl-alpha-D-glucosamine 1-phosphate + UTP + H(+) = UDP-N-acetyl-alpha-D-glucosamine + diphosphate. The protein operates within nucleotide-sugar biosynthesis; UDP-N-acetyl-alpha-D-glucosamine biosynthesis; N-acetyl-alpha-D-glucosamine 1-phosphate from alpha-D-glucosamine 6-phosphate (route II): step 2/2. It functions in the pathway nucleotide-sugar biosynthesis; UDP-N-acetyl-alpha-D-glucosamine biosynthesis; UDP-N-acetyl-alpha-D-glucosamine from N-acetyl-alpha-D-glucosamine 1-phosphate: step 1/1. Its pathway is bacterial outer membrane biogenesis; LPS lipid A biosynthesis. Functionally, catalyzes the last two sequential reactions in the de novo biosynthetic pathway for UDP-N-acetylglucosamine (UDP-GlcNAc). The C-terminal domain catalyzes the transfer of acetyl group from acetyl coenzyme A to glucosamine-1-phosphate (GlcN-1-P) to produce N-acetylglucosamine-1-phosphate (GlcNAc-1-P), which is converted into UDP-GlcNAc by the transfer of uridine 5-monophosphate (from uridine 5-triphosphate), a reaction catalyzed by the N-terminal domain. In Synechococcus sp. (strain JA-2-3B'a(2-13)) (Cyanobacteria bacterium Yellowstone B-Prime), this protein is Bifunctional protein GlmU.